The following is a 212-amino-acid chain: Thymidylate kinase (212 aa).

11-18 (GPDGAGKT) contacts ATP.

Belongs to the thymidylate kinase family.

The catalysed reaction is dTMP + ATP = dTDP + ADP. Phosphorylation of dTMP to form dTDP in both de novo and salvage pathways of dTTP synthesis. This is Thymidylate kinase from Streptococcus mutans serotype c (strain ATCC 700610 / UA159).